Consider the following 241-residue polypeptide: MEEDWEQLSEQEKVPIPAKKPDVNKWDGEDEEEEVKDSWEDEDELEEKKDEEKVETPKAKPKKTLQQKIADKEKLKQEEAERRRLEKEEEDMTPEQKLAEKLRLQKLQEESDLKNALDTFGVTSIVGGIDGMHPTNKEEFIELSDAICKKLSNYKNDTEYCAFLEDLVTKLFASLPSANIRKVKGILDNLYLEKQKLEKGDKPKKKAGGKIKARLRMDGENQNFDEYAPKYDDFDEYDDFM.

Residues 1 to 97 (MEEDWEQLSE…EEEDMTPEQK (97 aa)) are disordered. A compositionally biased stretch (acidic residues) spans 28–45 (GEDEEEEVKDSWEDEDEL). Residues 31 to 119 (EEEEVKDSWE…ESDLKNALDT (89 aa)) adopt a coiled-coil conformation. Basic and acidic residues-rich tracts occupy residues 46 to 58 (EEKK…ETPK) and 69 to 87 (IADK…RLEK).

This sequence belongs to the eIF-3 subunit J family. As to quaternary structure, component of the eukaryotic translation initiation factor 3 (eIF-3) complex.

It is found in the cytoplasm. Its function is as follows. Component of the eukaryotic translation initiation factor 3 (eIF-3) complex, which is involved in protein synthesis of a specialized repertoire of mRNAs and, together with other initiation factors, stimulates binding of mRNA and methionyl-tRNAi to the 40S ribosome. The eIF-3 complex specifically targets and initiates translation of a subset of mRNAs involved in cell proliferation. This Aedes aegypti (Yellowfever mosquito) protein is Eukaryotic translation initiation factor 3 subunit J.